A 119-amino-acid chain; its full sequence is MIEPEFKDGLLPVIVQDYETLEVLMFAYMNREAFDLTCSTGIAHYFSRSRGKLWKKGETSGHYQHVKEMRIDCDRDCLLILVEQDTGACHTGYRSCFYRTIEGDVVGEKTFEPADVYKN.

Mg(2+) is bound at residue aspartate 72. Cysteine 73 lines the Zn(2+) pocket. Mg(2+)-binding residues include aspartate 74 and aspartate 76. Zn(2+)-binding residues include cysteine 89 and cysteine 96.

Belongs to the PRA-CH family. As to quaternary structure, homodimer. Mg(2+) is required as a cofactor. Requires Zn(2+) as cofactor.

The protein localises to the cytoplasm. The catalysed reaction is 1-(5-phospho-beta-D-ribosyl)-5'-AMP + H2O = 1-(5-phospho-beta-D-ribosyl)-5-[(5-phospho-beta-D-ribosylamino)methylideneamino]imidazole-4-carboxamide. It functions in the pathway amino-acid biosynthesis; L-histidine biosynthesis; L-histidine from 5-phospho-alpha-D-ribose 1-diphosphate: step 3/9. Its function is as follows. Catalyzes the hydrolysis of the adenine ring of phosphoribosyl-AMP. This is Phosphoribosyl-AMP cyclohydrolase from Methanocella arvoryzae (strain DSM 22066 / NBRC 105507 / MRE50).